A 532-amino-acid polypeptide reads, in one-letter code: Telomerase Cajal body protein 1 (532 aa).

The segment at 1–48 is disordered; it reads MKTSEELRLAPDSLPSDLVPAPVLQASPADKNTDSEPVPPPCGGDDQL. Phosphoserine is present on residues Ser27, Ser61, and Ser83. The interval 83 to 115 is disordered; the sequence is SPRIEEQEVPENASLPVEETNRPELESGEAMEG. WD repeat units lie at residues 151-190, 206-251, 256-297, 307-348, 349-389, and 395-434; these read RSEN…YSES, EGDT…LRAS, NHLD…RDCE, GQSG…ALLG, GHQG…HLLW, and VTTN…SDCK. A Phosphothreonine modification is found at Thr474. Ser476 carries the post-translational modification Phosphoserine. The tract at residues 505-532 is disordered; that stretch reads CGGGPDPSNPDEDQDEKGQGRTEAVGMS.

Belongs to the TCAB1 family. Component of the telomerase holoenzyme complex composed of one molecule of TERT, one molecule of WRAP53/TCAB1, two molecules of H/ACA ribonucleoprotein complex subunits DKC1, NOP10, NHP2 and GAR1, and a telomerase RNA template component (TERC). The telomerase holoenzyme complex is associated with TEP1, SMG6/EST1A and POT1. Interacts with the chaperonin-containing T-complex (TRiC) complex; which mediates the folding of WRAP53/TCAB1. Interacts with COIL. Interacts with SMN1. Interacts with RNF8. Interacts with histone H2AX. Post-translationally, phosphorylated at Ser-61 by ATM in response to DNA damage, promoting its interaction with histone H2AX and localization to sites of DNA double-strand breaks.

The protein localises to the nucleus. It is found in the cajal body. Its subcellular location is the chromosome. The protein resides in the telomere. Functionally, RNA chaperone that plays a key role in telomere maintenance and RNA localization to Cajal bodies. Specifically recognizes and binds the Cajal body box (CAB box) present in both small Cajal body RNAs (scaRNAs) and telomerase RNA template component (TERC). Essential component of the telomerase holoenzyme complex, a ribonucleoprotein complex essential for the replication of chromosome termini that elongates telomeres in most eukaryotes. In the telomerase holoenzyme complex, required to stimulate the catalytic activity of the complex. Acts by specifically binding the CAB box of the TERC RNA and controlling the folding of the CR4/CR5 region of the TERC RNA, a critical step for telomerase activity. In addition, also controls telomerase holoenzyme complex localization to Cajal body. During S phase, required for delivery of TERC to telomeres during S phase and for telomerase activity. In addition to its role in telomere maintenance, also required for Cajal body formation, probably by mediating localization of scaRNAs to Cajal bodies. Also plays a role in DNA repair: phosphorylated by ATM in response to DNA damage and relocalizes to sites of DNA double-strand breaks to promote the repair of DNA double-strand breaks. Acts by recruiting the ubiquitin ligase RNF8 to DNA breaks and promote both homologous recombination (HR) and non-homologous end joining (NHEJ). The sequence is that of Telomerase Cajal body protein 1 from Rattus norvegicus (Rat).